A 104-amino-acid polypeptide reads, in one-letter code: L-rhamnose mutarotase (104 aa).

A substrate-binding site is contributed by Y18. Catalysis depends on H22, which acts as the Proton donor. Substrate contacts are provided by residues Y41 and W76–W77.

This sequence belongs to the rhamnose mutarotase family. In terms of assembly, homodimer.

The protein localises to the cytoplasm. The enzyme catalyses alpha-L-rhamnose = beta-L-rhamnose. Its pathway is carbohydrate metabolism; L-rhamnose metabolism. Involved in the anomeric conversion of L-rhamnose. This Listeria monocytogenes serotype 4b (strain F2365) protein is L-rhamnose mutarotase.